Reading from the N-terminus, the 296-residue chain is (3R)-3-[(carboxymethyl)amino]fatty acid oxygenase/decarboxylase (296 aa).

Residues Tyr66, Tyr71, and Gly98 each coordinate (3R)-3-[(carboxymethyl)amino]butanoate. The (3R)-3-{[carboxy(hydroxy)methyl]amino}butanoate site is built by Tyr66, Tyr71, and Gly98. His102 and Asp104 together coordinate Fe(2+). Residues Tyr105 and Lys163 each contribute to the (3R)-3-[(carboxymethyl)amino]butanoate site. The (3R)-3-{[carboxy(hydroxy)methyl]amino}butanoate site is built by Tyr105 and Lys163. A Fe(2+)-binding site is contributed by His265. Residue His269 participates in 2-oxoglutarate binding. Arg280 is a binding site for (3R)-3-[(carboxymethyl)amino]butanoate. Arg280 contributes to the (3R)-3-{[carboxy(hydroxy)methyl]amino}butanoate binding site.

This sequence belongs to the TfdA dioxygenase family. The cofactor is Fe(2+).

It catalyses the reaction a (3R)-3-[(carboxymethyl)amino]fatty acid + 2 2-oxoglutarate + 2 O2 = a (3R)-3-isocyanyl-fatty acid + 2 succinate + 3 CO2 + 2 H2O. It carries out the reaction a (3R)-3-[(carboxymethyl)amino]fatty acid + 2-oxoglutarate + O2 = a (3R)-3-{[carboxy(hydroxy)methyl]amino}fatty acid + succinate + CO2. The enzyme catalyses a (3R)-3-{[carboxy(hydroxy)methyl]amino}fatty acid + 2-oxoglutarate + O2 = a (3R)-3-isocyanyl-fatty acid + succinate + 2 CO2 + 2 H2O. The catalysed reaction is (3R)-3-[(carboxymethyl)amino]butanoate + 2 2-oxoglutarate + 2 O2 = (3R)-3-isocyanylbutanoate + 2 succinate + 3 CO2 + 2 H2O. It catalyses the reaction (3R)-3-[(carboxymethyl)amino]butanoate + 2-oxoglutarate + O2 = (3R)-3-{[carboxy(hydroxy)methyl]amino}butanoate + succinate + CO2. It carries out the reaction (3R)-3-{[carboxy(hydroxy)methyl]amino}butanoate + 2-oxoglutarate + O2 = (3R)-3-isocyanylbutanoate + succinate + 2 CO2 + 2 H2O. Its function is as follows. Involved in the biosynthesis of a unique class of isonitrile lipopeptides (INLPs). Catalyzes the conversion of (3R)-3-[(carboxymethyl)amino]fatty acids such as (3R)-3-[(carboxymethyl)amino]butanoate (CABA) to (3R)-3-isocyanylbutanoate (INBA) through an oxidative decarboxylation mechanism, thereby generating the isonitrile group of INLPs. In Streptomyces coeruleorubidus, this protein is (3R)-3-[(carboxymethyl)amino]fatty acid oxygenase/decarboxylase.